Consider the following 119-residue polypeptide: uncharacterized protein (119 aa).

The next 4 membrane-spanning stretches (helical) occupy residues 3–23, 29–49, 58–78, and 87–107; these read WVFL…MKLS, LIPS…LTLT, AYAV…FLFF, and VISI…EHVA.

This sequence belongs to the drug/metabolite transporter (DMT) superfamily. Small multidrug resistance (SMR) (TC 2.A.7.1) family.

Its subcellular location is the cell membrane. This is an uncharacterized protein from Bacillus subtilis (strain 168).